A 754-amino-acid polypeptide reads, in one-letter code: Disintegrin and metalloproteinase domain-containing protein 32 (754 aa).

Residues 1–22 (MLGAMLHTLLLLLLAELGALLA) form the signal peptide. Ser-23 bears the Phosphoserine mark. Residues 23–176 (SGPESQSSFL…TNYGILINKK (154 aa)) constitute a propeptide that is removed on maturation. Residue Asn-126 is glycosylated (N-linked (GlcNAc...) asparagine). The Extracellular portion of the chain corresponds to 177–689 (PKSPFKNLFP…ERASKNQEKK (513 aa)). In terms of domain architecture, Peptidase M12B spans 187–384 (LYLEMSIVVD…EGAKCLQNKP (198 aa)). 4 cysteine pairs are disulfide-bonded: Cys-296–Cys-379, Cys-338–Cys-363, Cys-340–Cys-345, and Cys-454–Cys-475. N-linked (GlcNAc...) asparagine glycans are attached at residues Asn-362, Asn-469, Asn-570, and Asn-571. In terms of domain architecture, Disintegrin spans 391 to 483 (AAVCGNGKVE…NCPPDVTINN (93 aa)). The EGF-like domain maps to 628–660 (QSKTCSSKCHGNGVCNSHGVCHCNAGYSPPNCQ). 3 disulfide bridges follow: Cys-632/Cys-642, Cys-636/Cys-648, and Cys-650/Cys-659. Residues 690–710 (WLLSLYIVLIILASVFLIGTG) form a helical membrane-spanning segment. The Cytoplasmic segment spans residues 711 to 754 (WKGLKQCGSKEEESMSSESKSEDSTYTYVSRSTSETSSMTSTSS). A compositionally biased stretch (basic and acidic residues) spans 720–733 (KEEESMSSESKSED). The interval 720 to 754 (KEEESMSSESKSEDSTYTYVSRSTSETSSMTSTSS) is disordered. Over residues 734–754 (STYTYVSRSTSETSSMTSTSS) the composition is skewed to low complexity.

In terms of tissue distribution, expressed in sperm (at protein level). Highly expressed in the testis and weakly expressed in the epididymis, brain and heart.

It is found in the membrane. Functionally, may play a role in sperm development and fertilization This is a non-catalytic metalloprotease-like protein. The polypeptide is Disintegrin and metalloproteinase domain-containing protein 32 (Mus musculus (Mouse)).